A 295-amino-acid chain; its full sequence is Protease Rv3090 (295 aa).

2 consecutive transmembrane segments (helical) span residues 2–22 (TWQI…ALFW) and 37–57 (VTIA…FTIV).

It localises to the cell membrane. The protein resides in the secreted. It is found in the cell wall. Functionally, protease that triggers late cell apoptosis and contributes to the pathogenicity and dissemination of M.tuberculosis. In a mouse model of infection, can induce hepatocyte and lung cell apoptosis and cause pathological damage to the spleen, liver and lungs. Specifically stimulates the secretion of inflammatory cytokines including TNF-alpha, IL-6 and IL-1 beta. Can degrade casein in vitro. The chain is Protease Rv3090 from Mycobacterium tuberculosis (strain ATCC 25618 / H37Rv).